Consider the following 433-residue polypeptide: Trigger factor (433 aa).

Residues 163 to 248 form the PPIase FKBP-type domain; it reads GDTVNIDFSG…VNEIKFKEVP (86 aa).

The protein belongs to the FKBP-type PPIase family. Tig subfamily.

The protein resides in the cytoplasm. It carries out the reaction [protein]-peptidylproline (omega=180) = [protein]-peptidylproline (omega=0). Its function is as follows. Involved in protein export. Acts as a chaperone by maintaining the newly synthesized protein in an open conformation. Functions as a peptidyl-prolyl cis-trans isomerase. The sequence is that of Trigger factor from Staphylococcus aureus (strain COL).